The chain runs to 587 residues: Capsid vertex component 2 (587 aa).

Residues 1–53 (MAEYVNYVLGSLYVSDTATSTIPTDVRNFIAPPFPLNFWSGPTFTVRSNTRAD) are interaction with major capsid protein/MCP. The segment at 113 to 132 (SADAATPQVNASEADQRPDN) is disordered.

This sequence belongs to the herpesviridae CVC2 protein family. Heterodimerizes with CVC1. Interacts with major capsid protein/MCP and triplex capsid protein 1/TRX1 at the pentamer vertices. Interacts with the large tegument protein/LTP.

Its subcellular location is the virion. It is found in the host nucleus. In terms of biological role, capsid vertex-specific component that plays a role during viral DNA encapsidation, assuring correct genome cleavage and presumably stabilizing capsids that contain full-length viral genomes. Participates in the interaction between the capsid and the tegument through interaction with the large tegument protein/LTP. This chain is Capsid vertex component 2, found in Equine herpesvirus 1 (strain V592) (EHV-1).